Consider the following 73-residue polypeptide: Disintegrin lachesin (73 aa).

Positions 1-73 constitute a Disintegrin domain; it reads EAGEECDCGA…ADCPRNGYYG (73 aa). Intrachain disulfides connect Cys-6–Cys-21, Cys-8–Cys-16, Cys-15–Cys-38, Cys-29–Cys-35, Cys-34–Cys-59, and Cys-47–Cys-66. The Cell attachment site motif lies at 51 to 53; it reads RGD. The segment at 51-73 is disordered; the sequence is RGDNPDDRCTGQSADCPRNGYYG.

The protein belongs to the venom metalloproteinase (M12B) family. P-II subfamily. P-IIa sub-subfamily. As to quaternary structure, monomer (disintegrin). As to expression, expressed by the venom gland.

The protein localises to the secreted. Inhibits fibrinogen interaction with platelets. Acts by binding to alpha-IIb/beta-3 (ITGA2B/ITGB3) on the platelet surface and inhibits aggregation induced by ADP, thrombin, platelet-activating factor and collagen. The chain is Disintegrin lachesin from Lachesis muta muta (Bushmaster).